We begin with the raw amino-acid sequence, 317 residues long: Gamma-glutamyl hydrolase (317 aa).

Positions 1-24 (MANLGYLLCLLGLLLCGLSSPGMS) are cleaved as a signal peptide. The 293-residue stretch at 25-317 (RPYNHGSERP…SSFQQAYMFD (293 aa)) folds into the Gamma-glutamyl hydrolase domain. Asparagine 100 carries N-linked (GlcNAc...) (high mannose) asparagine glycosylation. Cysteine 133 (nucleophile) is an active-site residue. 2 N-linked (GlcNAc...) (high mannose) asparagine glycosylation sites follow: asparagine 162 and asparagine 188. Asparagine 202 is a glycosylation site (N-linked (GlcNAc...) asparagine). The active-site Proton donor is histidine 243. The N-linked (GlcNAc...) asparagine glycan is linked to asparagine 306.

It belongs to the peptidase C26 family. As to quaternary structure, homodimer. As to expression, isoform I (more expressed than isoform II in all tissues) is highly expressed in salivary gland, followed by kidney, liver, lung, stomach and uterus, and weakly expressed in small intestine, brain and fetal liver. Also expressed at a lower level in thymus, spleen and skeletal muscle. Also expressed in tumors.

The protein localises to the secreted. It is found in the extracellular space. The protein resides in the lysosome. It localises to the melanosome. The catalysed reaction is (6S)-5,6,7,8-tetrahydrofolyl-(gamma-L-Glu)(n) + (n-1) H2O = (6S)-5,6,7,8-tetrahydrofolate + (n-1) L-glutamate. Hydrolyzes the polyglutamate sidechains of pteroylpolyglutamates. Progressively removes gamma-glutamyl residues from pteroylpoly-gamma-glutamate to yield pteroyl-alpha-glutamate (folic acid) and free glutamate. May play an important role in the bioavailability of dietary pteroylpolyglutamates and in the metabolism of pteroylpolyglutamates and antifolates. This chain is Gamma-glutamyl hydrolase (Ggh), found in Mus musculus (Mouse).